Reading from the N-terminus, the 631-residue chain is Glutamyl-tRNA(Gln) amidotransferase subunit E (631 aa).

Belongs to the GatB/GatE family. GatE subfamily. In terms of assembly, heterodimer of GatD and GatE.

It carries out the reaction L-glutamyl-tRNA(Gln) + L-glutamine + ATP + H2O = L-glutaminyl-tRNA(Gln) + L-glutamate + ADP + phosphate + H(+). Functionally, allows the formation of correctly charged Gln-tRNA(Gln) through the transamidation of misacylated Glu-tRNA(Gln) in organisms which lack glutaminyl-tRNA synthetase. The reaction takes place in the presence of glutamine and ATP through an activated gamma-phospho-Glu-tRNA(Gln). The GatDE system is specific for glutamate and does not act on aspartate. This is Glutamyl-tRNA(Gln) amidotransferase subunit E from Methanococcus maripaludis (strain C7 / ATCC BAA-1331).